Consider the following 72-residue polypeptide: MAKSDVIEVDGKIIEALPNATFRVELENGHIILCHIAGKMRMHYIKILPGDKVKLELTPYSLDKGRITYRYK.

An S1-like domain is found at 1–72 (MAKSDVIEVD…DKGRITYRYK (72 aa)).

It belongs to the IF-1 family. As to quaternary structure, component of the 30S ribosomal translation pre-initiation complex which assembles on the 30S ribosome in the order IF-2 and IF-3, IF-1 and N-formylmethionyl-tRNA(fMet); mRNA recruitment can occur at any time during PIC assembly.

The protein resides in the cytoplasm. One of the essential components for the initiation of protein synthesis. Stabilizes the binding of IF-2 and IF-3 on the 30S subunit to which N-formylmethionyl-tRNA(fMet) subsequently binds. Helps modulate mRNA selection, yielding the 30S pre-initiation complex (PIC). Upon addition of the 50S ribosomal subunit IF-1, IF-2 and IF-3 are released leaving the mature 70S translation initiation complex. The polypeptide is Translation initiation factor IF-1 (Sulfurimonas denitrificans (strain ATCC 33889 / DSM 1251) (Thiomicrospira denitrificans (strain ATCC 33889 / DSM 1251))).